The sequence spans 356 residues: MQTLHALLRDIPAPDAEAMARAQQHIDGLLKPPGSLGRLETLAVQLAGMPGLNGTPQVGEKAVLVMCADHGVWDEGVAVSPKIVTAIQAANMTRGTTGVCVLAAQAGAKVYVIDVGIDAEPIPGVVDMRVARGCGNIAVGPAMSRSQAEALLLEVSRYTCDLAQRGVTLFGVGELGMANTTPAAAMVSVFTGSDAKEVVGIGANLPPSRIDNKVDVVRRAIAINQPNPRDGIDVLSKVGGFDLVGMTGVILGAARCGLPVLLDGFLSYSAALAACQIAPAVRPYLIPSHFSAEKGARIALAHLSMEPYLHMAMRLGEGSGAALAMPIVEAACAMFHNMGELAASNIVLPEGNANAT.

The active-site Proton acceptor is E317.

It belongs to the CobT family. Homodimer.

The enzyme catalyses 5,6-dimethylbenzimidazole + nicotinate beta-D-ribonucleotide = alpha-ribazole 5'-phosphate + nicotinate + H(+). Its pathway is nucleoside biosynthesis; alpha-ribazole biosynthesis; alpha-ribazole from 5,6-dimethylbenzimidazole: step 1/2. In terms of biological role, catalyzes the synthesis of alpha-ribazole-5'-phosphate from nicotinate mononucleotide (NAMN) and 5,6-dimethylbenzimidazole (DMB). This is Nicotinate-nucleotide--dimethylbenzimidazole phosphoribosyltransferase from Salmonella agona (strain SL483).